Consider the following 243-residue polypeptide: UPF0246 protein Sez_1855 (243 aa).

Belongs to the UPF0246 family.

The polypeptide is UPF0246 protein Sez_1855 (Streptococcus equi subsp. zooepidemicus (strain MGCS10565)).